The sequence spans 56 residues: uncharacterized protein (56 aa).

This is an uncharacterized protein from Schizosaccharomyces pombe (strain 972 / ATCC 24843) (Fission yeast).